A 278-amino-acid polypeptide reads, in one-letter code: Ferredoxin--NADP reductase A (278 aa).

Residues 3-103 (PGYTEETVLE…KRATGTLTIG (101 aa)) enclose the FAD-binding FR-type domain. Residues 52-55 (RAYS) and Thr118 each bind FAD.

The protein belongs to the ferredoxin--NADP reductase type 1 family. FAD is required as a cofactor.

It carries out the reaction 2 reduced [4Fe-4S]-[ferredoxin] + NADP(+) + H(+) = 2 oxidized [4Fe-4S]-[ferredoxin] + NADPH. Transports electrons between NADPH and ferredoxin. Can transfer electrons to ferredoxins Fdx2 and Fdx8. Prefers NADPH to NADH. This chain is Ferredoxin--NADP reductase A, found in Sorangium cellulosum (strain So ce56) (Polyangium cellulosum (strain So ce56)).